We begin with the raw amino-acid sequence, 513 residues long: Histidine ammonia-lyase (513 aa).

A cross-link (5-imidazolinone (Ala-Gly)) is located at residues 145-147 (ASG). 2,3-didehydroalanine (Ser) is present on S146.

The protein belongs to the PAL/histidase family. Contains an active site 4-methylidene-imidazol-5-one (MIO), which is formed autocatalytically by cyclization and dehydration of residues Ala-Ser-Gly.

It localises to the cytoplasm. It catalyses the reaction L-histidine = trans-urocanate + NH4(+). It participates in amino-acid degradation; L-histidine degradation into L-glutamate; N-formimidoyl-L-glutamate from L-histidine: step 1/3. In Vibrio vulnificus (strain YJ016), this protein is Histidine ammonia-lyase.